The following is a 155-amino-acid chain: Ribonuclease H (155 aa).

Residues 1-142 (MTKQVEIFTD…CDELARAAAM (142 aa)) form the RNase H type-1 domain. Mg(2+)-binding residues include D10, E48, D70, and D134.

The protein belongs to the RNase H family. As to quaternary structure, monomer. Requires Mg(2+) as cofactor.

It is found in the cytoplasm. It carries out the reaction Endonucleolytic cleavage to 5'-phosphomonoester.. In terms of biological role, endonuclease that specifically degrades the RNA of RNA-DNA hybrids. The chain is Ribonuclease H from Enterobacter sp. (strain 638).